The sequence spans 455 residues: Histone chaperone RTT106 (455 aa).

Serine 2 is subject to N-acetylserine. The interval serine 2–isoleucine 67 is dimeric region. PH domains are found at residues serine 68–isoleucine 200 and isoleucine 217–lysine 301. Residues serine 68–lysine 301 form a double PH domain region. Basic and acidic residues predominate over residues aspartate 305–alanine 314. Residues aspartate 305–aspartate 455 are disordered. Residues lysine 319–glutamine 339 are compositionally biased toward polar residues. 2 stretches are compositionally biased toward acidic residues: residues serine 350 to leucine 366 and aspartate 376 to glutamate 395. Over residues alanine 402–glutamine 418 the composition is skewed to polar residues. Phosphoserine occurs at positions 408 and 411. Over residues leucine 420 to leucine 429 the composition is skewed to basic and acidic residues. Residues glutamate 430–aspartate 455 show a composition bias toward acidic residues. Phosphoserine is present on serine 450.

It belongs to the RTT106 family. As to quaternary structure, homodimers (via the N-terminal domain). Interacts with the SWI/SNF complex. Interacts with the RSC complex. Interacts with the HIR complex. Interacts with the CAF-1 complex. Interacts with RLF2. Interacts with SIR4. Interacts with YTA7. Interacts with CAC2. Interacts with HPC2. Interacts with HIR2. Interacts with MSI1. Interacts with HIR1. Interacts with histone H3. Interacts with histone H4.

The protein localises to the nucleus. It localises to the chromosome. Its function is as follows. Histones H3 and H4 chaperone involved in the nucleosome formation and heterochromatin silencing. Required for the deposition of H3K56ac-carrying H3-H4 complex onto newly-replicated DNA. Plays a role in the transcriptional regulation of the cell-cycle dependent histone genes by directly recruiting the SWI/SNF and RSC chromatin remodeling complexes to the histone genes in a cell cycle dependent manner. In cooperation with HIR and ASF1, creates a repressive structure at the core histone gene promoter and contributes to their repression outside of S phase. Involved in regulation of Ty1 transposition. The polypeptide is Histone chaperone RTT106 (Saccharomyces cerevisiae (strain ATCC 204508 / S288c) (Baker's yeast)).